Here is a 119-residue protein sequence, read N- to C-terminus: Small ribosomal subunit protein bS16 (119 aa).

Positions 89 to 103 (TTKSTKEKAATDKKA) are enriched in basic and acidic residues. The disordered stretch occupies residues 89 to 119 (TTKSTKEKAATDKKAKVTKKPKTKTTTDVKK).

The protein belongs to the bacterial ribosomal protein bS16 family.

The sequence is that of Small ribosomal subunit protein bS16 from Spiroplasma kunkelii.